A 649-amino-acid polypeptide reads, in one-letter code: Pesticidal crystal protein Cry3Ca (649 aa).

Over residues 1–13 (MNPNNRSEHDTIK) the composition is skewed to basic and acidic residues. The interval 1–29 (MNPNNRSEHDTIKATENNEVSNNHAQYPL) is disordered. Polar residues predominate over residues 14–25 (ATENNEVSNNHA).

It belongs to the delta endotoxin family.

Its function is as follows. Promotes colloidosmotic lysis by binding to the midgut epithelial cells of Coleoptera. The protein is Pesticidal crystal protein Cry3Ca (cry3Ca) of Bacillus thuringiensis subsp. kurstaki.